The following is a 225-amino-acid chain: tRNA (guanine-N(7)-)-methyltransferase (225 aa).

Residues E56, E81, D108, and D131 each contribute to the S-adenosyl-L-methionine site. Residue D131 is part of the active site. Substrate-binding positions include K135, D167, and 204–207 (TKFE).

The protein belongs to the class I-like SAM-binding methyltransferase superfamily. TrmB family.

It catalyses the reaction guanosine(46) in tRNA + S-adenosyl-L-methionine = N(7)-methylguanosine(46) in tRNA + S-adenosyl-L-homocysteine. Its pathway is tRNA modification; N(7)-methylguanine-tRNA biosynthesis. Catalyzes the formation of N(7)-methylguanine at position 46 (m7G46) in tRNA. This is tRNA (guanine-N(7)-)-methyltransferase from Legionella pneumophila (strain Corby).